A 571-amino-acid polypeptide reads, in one-letter code: Double-stranded RNA-binding protein Staufen homolog 2 (571 aa).

The region spanning Thr8–Leu75 is the DRBM 1 domain. Phosphoserine is present on residues Pro9 and Val13. Position 18 is a phosphothreonine (Arg18). Ser21 carries the post-translational modification Phosphoserine. Disordered stretches follow at residues Thr71 to Ile94 and Ala178 to Asp203. The segment covering Pro83–Ile94 has biased composition (polar residues). Residues Thr95–Asn181 form the DRBM 2 domain. At Ser188 the chain carries Phosphoserine. Residues Ser194–Asp203 show a composition bias toward basic and acidic residues. DRBM domains are found at residues Ser207–Lys274 and Asn307–Tyr375. 2 consecutive short sequence motifs (nuclear localization signal) follow at residues Lys273–Gln317 and Leu373–Ile412. Positions Leu381–Ile571 are required for dendritic transport. Positions Gln382 to Leu413 are disordered. 6 positions are modified to phosphoserine: Ser395, Ser416, Ser426, Ser440, Ser456, and Ser493. The disordered stretch occupies residues Leu546–Ile571. Over residues Asn552–Gln562 the composition is skewed to polar residues.

In terms of assembly, identified in a mRNP complex, at least composed of DHX9, DDX3X, ELAVL1, HNRNPU, IGF2BP1, ILF3, PABPC1, PCBP2, PTBP2, STAU1, STAU2, SYNCRIP and YBX1. Interacts with the exportin XPO5. This requires RNA and RAN bound to GTP. Interacts with microtubules. Isoform 2 and isoform 3 may also interact with ribosomes, and this association is independent of translation. Interacts with TRIM71 (via NHL repeats) in an RNA-dependent manner. Expressed in both somata and dendrites of hippocampal neurons.

The protein localises to the nucleus. The protein resides in the nucleolus. Its subcellular location is the cytoplasm. It is found in the endoplasmic reticulum. RNA-binding protein required for the microtubule-dependent transport of neuronal RNA from the cell body to the dendrite. As protein synthesis occurs within the dendrite, the localization of specific mRNAs to dendrites may be a prerequisite for neurite outgrowth and plasticity at sites distant from the cell body. The sequence is that of Double-stranded RNA-binding protein Staufen homolog 2 (Stau2) from Rattus norvegicus (Rat).